Here is a 530-residue protein sequence, read N- to C-terminus: Autoinducer-2 kinase (530 aa).

The protein belongs to the FGGY kinase family.

The protein resides in the cytoplasm. The enzyme catalyses (S)-4,5-dihydroxypentane-2,3-dione + ATP = (2S)-2-hydroxy-3,4-dioxopentyl phosphate + ADP + H(+). Its function is as follows. Catalyzes the phosphorylation of autoinducer-2 (AI-2) to phospho-AI-2, which subsequently inactivates the transcriptional regulator LsrR and leads to the transcription of the lsr operon. Phosphorylates the ring-open form of (S)-4,5-dihydroxypentane-2,3-dione (DPD), which is the precursor to all AI-2 signaling molecules, at the C5 position. The polypeptide is Autoinducer-2 kinase (Escherichia coli O9:H4 (strain HS)).